The chain runs to 194 residues: FAD-linked sulfhydryl oxidase ERV1 (194 aa).

A disordered region spans residues 44–72; it reads LSLSLSPPPTPPSPPPPPPEVLKKDSKAA. Pro residues predominate over residues 49–63; that stretch reads SPPPTPPSPPPPPPE. The region spanning 72–172 is the ERV/ALR sulfhydryl oxidase domain; it reads APLTKEEVGR…FPCQRVNARW (101 aa). FAD-binding residues include Lys-76, Arg-81, Trp-84, Glu-121, His-125, Cys-148, His-151, Asn-152, Asn-155, Lys-160, and Arg-171. An intrachain disulfide couples Cys-119 to Cys-122. The cysteines at positions 148 and 165 are disulfide-linked. Cys-177 and Cys-182 form a disulfide bridge. The Required for dimerization and substrate specificity motif lies at 177–182; sequence CPERSC.

As to quaternary structure, homodimer. FAD serves as cofactor. Post-translationally, contains three disulfide bonds; one catalytic disulfide (Cys-119 to Cys-122), one structural disulfide (Cys-148 to Cys-165), and one shuttle disulfide (Cys-177 to Cys-182).

The protein resides in the mitochondrion. It catalyses the reaction 2 R'C(R)SH + O2 = R'C(R)S-S(R)CR' + H2O2. In terms of biological role, FAD-dependent sulfhydryl oxidase that catalyzes disulfide bond formation. Oxidizes thioredoxin in vitro. Required for the import and folding of small cysteine-containing proteins in the mitochondrial intermembrane space, and can act independently of the oxidoreductase MIA40. Can oxidize the cytochrome c oxidase assembly protein COX19, a typical substrate of MIA40. In Oryza sativa subsp. japonica (Rice), this protein is FAD-linked sulfhydryl oxidase ERV1.